A 266-amino-acid chain; its full sequence is Mediator of RNA polymerase II transcription subunit 18 (266 aa).

The protein belongs to the Mediator complex subunit 18 family. As to quaternary structure, component of the Mediator complex.

It localises to the nucleus. Component of the Mediator complex, a coactivator involved in the regulated transcription of nearly all RNA polymerase II-dependent genes. Mediator functions as a bridge to convey information from gene-specific regulatory proteins to the basal RNA polymerase II transcription machinery. Mediator is recruited to promoters by direct interactions with regulatory proteins and serves as a scaffold for the assembly of a functional preinitiation complex with RNA polymerase II and the general transcription factors. In Candida glabrata (strain ATCC 2001 / BCRC 20586 / JCM 3761 / NBRC 0622 / NRRL Y-65 / CBS 138) (Yeast), this protein is Mediator of RNA polymerase II transcription subunit 18 (SRB5).